The chain runs to 463 residues: GTPase Der (463 aa).

EngA-type G domains follow at residues 27 to 190 (PVVA…PEVG) and 200 to 373 (RRVA…ASWD). GTP is bound by residues 33–40 (GRPNVGKS), 80–84 (DTGGW), 142–145 (NKVD), 206–213 (GKPNVGKS), 253–257 (DTAGL), and 318–321 (NKWD). Residues 374-456 (TRIATGPLNT…PIRVNVRVRE (83 aa)) enclose the KH-like domain.

The protein belongs to the TRAFAC class TrmE-Era-EngA-EngB-Septin-like GTPase superfamily. EngA (Der) GTPase family. Associates with the 50S ribosomal subunit.

GTPase that plays an essential role in the late steps of ribosome biogenesis. This chain is GTPase Der, found in Mycobacterium bovis (strain ATCC BAA-935 / AF2122/97).